Here is a 102-residue protein sequence, read N- to C-terminus: Small ribosomal subunit protein uS10 (102 aa).

The segment at 34 to 61 (MAGPIPLPTKTLKVTTRKSTDGEGSSSF) is disordered.

The protein belongs to the universal ribosomal protein uS10 family. In terms of assembly, part of the 30S ribosomal subunit.

Involved in the binding of tRNA to the ribosomes. This is Small ribosomal subunit protein uS10 from Methanococcus aeolicus (strain ATCC BAA-1280 / DSM 17508 / OCM 812 / Nankai-3).